Reading from the N-terminus, the 305-residue chain is Protein-methionine-sulfoxide reductase catalytic subunit MsrP (305 aa).

The tat-type signal signal peptide spans 1 to 54 (MLIRKPADHLPSEITSESVYFNRRQFMAGAAGLLLSAETLAGLAAKKSPLSQLA). Mo-molybdopterin is bound by residues N69, 72–73 (YE), C126, T161, N209, R214, and 225–227 (SIK).

It belongs to the MsrP family. In terms of assembly, heterodimer of a catalytic subunit (MsrP) and a heme-binding subunit (MsrQ). Mo-molybdopterin is required as a cofactor. In terms of processing, predicted to be exported by the Tat system. The position of the signal peptide cleavage has not been experimentally proven.

It localises to the periplasm. The enzyme catalyses L-methionyl-[protein] + a quinone + H2O = L-methionyl-(S)-S-oxide-[protein] + a quinol. It catalyses the reaction L-methionyl-[protein] + a quinone + H2O = L-methionyl-(R)-S-oxide-[protein] + a quinol. Functionally, part of the MsrPQ system that repairs oxidized periplasmic proteins containing methionine sulfoxide residues (Met-O), using respiratory chain electrons. Thus protects these proteins from oxidative-stress damage caused by reactive species of oxygen and chlorine generated by the host defense mechanisms. MsrPQ is essential for the maintenance of envelope integrity under bleach stress, rescuing a wide series of structurally unrelated periplasmic proteins from methionine oxidation. The catalytic subunit MsrP is non-stereospecific, being able to reduce both (R-) and (S-) diastereoisomers of methionine sulfoxide. This Chromobacterium violaceum (strain ATCC 12472 / DSM 30191 / JCM 1249 / CCUG 213 / NBRC 12614 / NCIMB 9131 / NCTC 9757 / MK) protein is Protein-methionine-sulfoxide reductase catalytic subunit MsrP.